A 502-amino-acid polypeptide reads, in one-letter code: Protein DETOXIFICATION 7 (502 aa).

12 helical membrane passes run 36–56, 68–88, 112–132, 143–163, 182–202, 208–228, 262–282, 291–311, 331–351, 375–395, 408–428, and 436–456; these read MAAP…ISMV, AVAI…VGFA, YSSM…WFFM, PLIS…LFGF, LFVS…LLVY, IVGA…LLWI, AMMI…SGLL, VISI…AIGA, AAVN…TITL, ITPI…LSGV, ASLG…CFVM, and WIGI…VTFF.

It belongs to the multi antimicrobial extrusion (MATE) (TC 2.A.66.1) family.

Its subcellular location is the membrane. This chain is Protein DETOXIFICATION 7, found in Arabidopsis thaliana (Mouse-ear cress).